The following is a 363-amino-acid chain: Trichocyst matrix protein T4-A (363 aa).

An N-terminal signal peptide occupies residues 1–17 (MARSLTILAIVFAVATA). Positions 18-52 (RVTKSESPKEILAQVNKDSFGNSILSVLQLQLATG) are excised as a propeptide. The stretch at 85–119 (VAFEKIIADLEQEIAYHQTQIVALSNLRDSTTEAL) forms a coiled coil. The propeptide occupies 190-221 (RFEKVQAKLMESKHALFKPLINALTQLASKVD). Positions 244-352 (ASLLATEERQ…EVLTQKLSAA (109 aa)) form a coiled coil.

The protein belongs to the TMP family. Post-translationally, two components are produced by post-translational processing from the precursor peptide.

It is found in the trichocyst. Structural protein that crystallize inside the trichocyst matrix. This chain is Trichocyst matrix protein T4-A (T4A), found in Paramecium tetraurelia.